A 1272-amino-acid chain; its full sequence is Protein diaphanous homolog 1 (1272 aa).

An N-acetylmethionine modification is found at Met1. Positions 1-12 (MEPPGGSLGPGR) are enriched in gly residues. A disordered region spans residues 1–84 (MEPPGGSLGP…YGDDPTAQSL (84 aa)). Residues Ser7, Ser22, and Ser36 each carry the phosphoserine modification. A compositionally biased stretch (basic and acidic residues) spans 44–65 (LMADELERFTSMRIKKEKEKPN). Positions 67–84 (AHRNSSASYGDDPTAQSL) are enriched in polar residues. The GBD/FH3 domain occupies 84-449 (LQDVSDEQVL…QIVLHKNGAD (366 aa)). Residues 468–572 (MIDKTKVEKS…ASLSAAAITV (105 aa)) are a coiled coil. The disordered stretch occupies residues 573 to 755 (PPSVPSRAPV…GMPPPPPFGF (183 aa)). Composition is skewed to pro residues over residues 574 to 589 (PSVP…PPLP), 596 to 622 (IPPP…PPLP), and 640 to 658 (SPPP…PPLP). One can recognise an FH1 domain in the interval 583–764 (PPAPPLPGDS…FGVPAAPVLP (182 aa)). Over residues 659-674 (EGVGIPSPSSLPGGTA) the composition is skewed to low complexity. The span at 675–753 (IPPPPPLPGS…GMGMPPPPPF (79 aa)) shows a compositional bias: pro residues. Thr768 carries the phosphothreonine modification. Positions 769 to 1171 (PKKLYKPEVQ…MRRAKLAKEK (403 aa)) constitute an FH2 domain. Residues 1039–1196 (DELAHVEKAS…IDMNAEGDET (158 aa)) are a coiled coil. N6-acetyllysine is present on residues Lys1057 and Lys1103. Tyr1121 is modified (phosphotyrosine). One can recognise a DAD domain in the interval 1194–1222 (DETGVMDSLLEALQSGAAFRRKRGPRQAN). Phosphoserine is present on residues Ser1251 and Ser1254.

The protein belongs to the formin homology family. Diaphanous subfamily. In terms of assembly, homodimer. Interacts with the GTP-bound form of RHOA. Interacts with RHOC, PFY1, MAPRE1 and BAIAP2. Interacts with APC; acts as a scaffold protein for MAPRE1 and APC to stabilize microtubules and promote cell migration. Interacts with SCAI. Interacts with DCAF7, via FH2 domain. Interacts with NCDN. Interacts with OSBPL10, OSBPL2, VIM, TUBB and DYN1. Post-translationally, phosphorylation at Thr-768 is stimulated by cAMP and regulates stability, complex formation and mitochondrial movement. In terms of tissue distribution, expressed in brain, heart, placenta, lung, kidney, pancreas, liver, skeletal muscle and cochlea. Expressed in platelets.

The protein localises to the cell membrane. It localises to the cell projection. It is found in the ruffle membrane. The protein resides in the cytoplasm. Its subcellular location is the cytoskeleton. The protein localises to the microtubule organizing center. It localises to the centrosome. It is found in the spindle. The protein resides in the nucleus. Its function is as follows. Actin nucleation and elongation factor required for the assembly of F-actin structures, such as actin cables and stress fibers. Binds to the barbed end of the actin filament and slows down actin polymerization and depolymerization. Required for cytokinesis, and transcriptional activation of the serum response factor. DFR proteins couple Rho and Src tyrosine kinase during signaling and the regulation of actin dynamics. Functions as a scaffold protein for MAPRE1 and APC to stabilize microtubules and promote cell migration. Has neurite outgrowth promoting activity. Acts in a Rho-dependent manner to recruit PFY1 to the membrane. In hear cells, it may play a role in the regulation of actin polymerization in hair cells. The MEMO1-RHOA-DIAPH1 signaling pathway plays an important role in ERBB2-dependent stabilization of microtubules at the cell cortex. It controls the localization of APC and CLASP2 to the cell membrane, via the regulation of GSK3B activity. In turn, membrane-bound APC allows the localization of the MACF1 to the cell membrane, which is required for microtubule capture and stabilization. Plays a role in the regulation of cell morphology and cytoskeletal organization. Required in the control of cell shape. Plays a role in brain development. Also acts as an actin nucleation and elongation factor in the nucleus by promoting nuclear actin polymerization inside the nucleus to drive serum-dependent SRF-MRTFA activity. The polypeptide is Protein diaphanous homolog 1 (DIAPH1) (Homo sapiens (Human)).